A 541-amino-acid polypeptide reads, in one-letter code: Peptidyl-prolyl isomerase cwc-27 (541 aa).

The region spanning 11–193 (PTASAIIHTT…YPIKITRIEI (183 aa)) is the PPIase cyclophilin-type domain. Disordered stretches follow at residues 199–443 (DDMQ…GQAD) and 513–541 (TLKEEKKATRDAKTGGSSRAWDRGRRDRH). 3 stretches are compositionally biased toward basic and acidic residues: residues 279 to 307 (AKRDAKPVANDVPKREEKPEPKPVKESRR), 316 to 348 (QKKEQPPKKHYSEHSSPEPEEPKKKSLLEKTNE), and 361 to 374 (IHSEPVKQEKKKSA). The span at 432–442 (DVEDGEQDGQA) shows a compositional bias: acidic residues. 2 stretches are compositionally biased toward basic and acidic residues: residues 513–525 (TLKEEKKATRDAK) and 532–541 (AWDRGRRDRH).

Belongs to the cyclophilin-type PPIase family. CWC27 subfamily. As to quaternary structure, associated with the spliceosome.

It is found in the cytoplasm. The protein localises to the nucleus. The catalysed reaction is [protein]-peptidylproline (omega=180) = [protein]-peptidylproline (omega=0). In terms of biological role, PPIases accelerate the folding of proteins. It catalyzes the cis-trans isomerization of proline imidic peptide bonds in oligopeptides. Involved in pre-mRNA splicing. In Neurospora crassa (strain ATCC 24698 / 74-OR23-1A / CBS 708.71 / DSM 1257 / FGSC 987), this protein is Peptidyl-prolyl isomerase cwc-27 (cwc-27).